We begin with the raw amino-acid sequence, 315 residues long: Glycine--tRNA ligase alpha subunit (315 aa).

Belongs to the class-II aminoacyl-tRNA synthetase family. Tetramer of two alpha and two beta subunits.

It localises to the cytoplasm. The enzyme catalyses tRNA(Gly) + glycine + ATP = glycyl-tRNA(Gly) + AMP + diphosphate. The polypeptide is Glycine--tRNA ligase alpha subunit (Pseudomonas putida (strain W619)).